We begin with the raw amino-acid sequence, 135 residues long: Small ribosomal subunit protein uS9 (135 aa).

The interval 96–135 is disordered; sequence SADNRKPLKTEGHLSRDPRAKERRKYGLKKARKAPQFSKR. The span at 97–115 shows a compositional bias: basic and acidic residues; it reads ADNRKPLKTEGHLSRDPRA. Over residues 116 to 135 the composition is skewed to basic residues; it reads KERRKYGLKKARKAPQFSKR.

Belongs to the universal ribosomal protein uS9 family.

In Prochlorococcus marinus (strain MIT 9303), this protein is Small ribosomal subunit protein uS9.